The chain runs to 188 residues: Peptidyl-tRNA hydrolase (188 aa).

Tyrosine 18 contacts tRNA. The Proton acceptor role is filled by histidine 23. Tyrosine 67, asparagine 69, and asparagine 115 together coordinate tRNA.

The protein belongs to the PTH family. In terms of assembly, monomer.

It localises to the cytoplasm. It carries out the reaction an N-acyl-L-alpha-aminoacyl-tRNA + H2O = an N-acyl-L-amino acid + a tRNA + H(+). In terms of biological role, hydrolyzes ribosome-free peptidyl-tRNAs (with 1 or more amino acids incorporated), which drop off the ribosome during protein synthesis, or as a result of ribosome stalling. Its function is as follows. Catalyzes the release of premature peptidyl moieties from peptidyl-tRNA molecules trapped in stalled 50S ribosomal subunits, and thus maintains levels of free tRNAs and 50S ribosomes. The sequence is that of Peptidyl-tRNA hydrolase from Salinibacter ruber (strain DSM 13855 / M31).